The primary structure comprises 2184 residues: Genome polyprotein (2184 aa).

The N-myristoyl glycine; by host moiety is linked to residue G2. Residues 2 to 1494 (GAQVSTQKTG…HVSRAFICLQ (1493 aa)) are Cytoplasmic-facing. The segment at 566–582 (FYQSPVEGAIERAIARV) is amphipathic alpha-helix. Active-site for protease 2A activity residues include H871 and D889. The Zn(2+) site is built by C906 and C908. C960 (for protease 2A activity) is an active-site residue. The Zn(2+) site is built by C966 and H968. The tract at residues 1100–1172 (SNGWLKKFTE…EQSAPSQSDQ (73 aa)) is membrane-binding. Residues 1100–1238 (SNGWLKKFTE…SPGAGKSVAT (139 aa)) are oligomerization. The RNA-binding stretch occupies residues 1121–1125 (AIKIQ). One can recognise an SF3 helicase domain in the interval 1204-1360 (EKKMSNYIQF…SMYSQNGKIN (157 aa)). Residues C1368, C1380, and C1385 each coordinate Zn(2+). The C4-type; degenerate zinc-finger motif lies at 1368–1385 (CDEECCPVNFKKCCPLVC). The tract at residues 1412-1419 (EYNHRHSV) is RNA-binding. The tract at residues 1423-1428 (LEALFQ) is oligomerization. The stretch at 1495–1510 (ALTTFVSVAGIIYIIY) is an intramembrane region. Residues 1511 to 2184 (KLFAGFQGAY…TLRRKWLDSF (674 aa)) lie on the Cytoplasmic side of the membrane. At Y1520 the chain carries O-(5'-phospho-RNA)-tyrosine. One can recognise a Peptidase C3 domain in the interval 1540-1718 (GPAFEFAVAM…FSAALLKHYF (179 aa)). Catalysis depends on for protease 3C activity residues H1579, E1610, and C1686. The region spanning 1949-2065 (GHLIAFDYSG…SYPWPIDASL (117 aa)) is the RdRp catalytic domain. Mg(2+) is bound by residues D1955 and D2051.

This sequence belongs to the picornaviruses polyprotein family. As to quaternary structure, interacts with capsid protein VP1 and capsid protein VP3 to form heterotrimeric protomers. In terms of assembly, interacts with capsid protein VP0, and capsid protein VP3 to form heterotrimeric protomers. Five protomers subsequently associate to form pentamers which serve as building blocks for the capsid. Interacts with capsid protein VP2, capsid protein VP3 and capsid protein VP4 following cleavage of capsid protein VP0. Interacts with host CXADR. Interacts with capsid protein VP1 and capsid protein VP3 in the mature capsid. As to quaternary structure, interacts with capsid protein VP0 and capsid protein VP1 to form heterotrimeric protomers. Five protomers subsequently associate to form pentamers which serve as building blocks for the capsid. Interacts with capsid protein VP4 in the mature capsid. Interacts with protein 2C; this interaction may be important for virion morphogenesis. In terms of assembly, interacts with capsid protein VP1 and capsid protein VP3. Homodimer. As to quaternary structure, homohexamer; forms a hexameric ring structure with 6-fold symmetry characteristic of AAA+ ATPases. Interacts (via N-terminus) with host RTN3 (via reticulon domain); this interaction is important for viral replication. Interacts with capsid protein VP3; this interaction may be important for virion morphogenesis. In terms of assembly, interacts with protein 3CD. Homodimer. Interacts with host GBF1. Interacts (via GOLD domain) with host ACBD3 (via GOLD domain); this interaction allows the formation of a viral protein 3A/ACBD3 heterotetramer with a 2:2 stoichiometry, which will stimulate the recruitment of host PI4KB in order to synthesize PI4P at the viral RNA replication sites. As to quaternary structure, interacts with RNA-directed RNA polymerase. In terms of assembly, interacts with protein 3AB and with RNA-directed RNA polymerase. Interacts with Viral protein genome-linked and with protein 3CD. Requires Mg(2+) as cofactor. Post-translationally, specific enzymatic cleavages in vivo by the viral proteases yield processing intermediates and the mature proteins. In terms of processing, myristoylation is required for the formation of pentamers during virus assembly. Further assembly of 12 pentamers and a molecule of genomic RNA generates the provirion. During virion maturation, immature virions are rendered infectious following cleavage of VP0 into VP4 and VP2. This maturation seems to be an autocatalytic event triggered by the presence of RNA in the capsid and it is followed by a conformational change infectious virion. Post-translationally, myristoylation is required during RNA encapsidation and formation of the mature virus particle. In terms of processing, VPg is uridylylated by the polymerase into VPg-pUpU. This acts as a nucleotide-peptide primer for the genomic RNA replication.

It localises to the virion. The protein localises to the host cytoplasm. It is found in the host cytoplasmic vesicle membrane. Its subcellular location is the host nucleus. It carries out the reaction a ribonucleoside 5'-triphosphate + H2O = a ribonucleoside 5'-diphosphate + phosphate + H(+). The catalysed reaction is Selective cleavage of Tyr-|-Gly bond in the picornavirus polyprotein.. It catalyses the reaction RNA(n) + a ribonucleoside 5'-triphosphate = RNA(n+1) + diphosphate. The enzyme catalyses Selective cleavage of Gln-|-Gly bond in the poliovirus polyprotein. In other picornavirus reactions Glu may be substituted for Gln, and Ser or Thr for Gly.. With respect to regulation, replication or transcription is subject to high level of random mutations by the nucleotide analog ribavirin. Its function is as follows. Forms an icosahedral capsid of pseudo T=3 symmetry with capsid proteins VP2 and VP3. The capsid is 300 Angstroms in diameter, composed of 60 copies of each capsid protein and enclosing the viral positive strand RNA genome. Capsid protein VP1 mainly forms the vertices of the capsid. Capsid protein VP1 interacts with host CXADR to provide virion attachment to target host cells. This attachment induces virion internalization. Tyrosine kinases are probably involved in the entry process. After binding to its receptor, the capsid undergoes conformational changes. Capsid protein VP1 N-terminus (that contains an amphipathic alpha-helix) and capsid protein VP4 are externalized. Together, they shape a pore in the host membrane through which viral genome is translocated to host cell cytoplasm. Forms an icosahedral capsid of pseudo T=3 symmetry with capsid proteins VP2 and VP3. The capsid is 300 Angstroms in diameter, composed of 60 copies of each capsid protein and enclosing the viral positive strand RNA genome. Functionally, lies on the inner surface of the capsid shell. After binding to the host receptor, the capsid undergoes conformational changes. Capsid protein VP4 is released, Capsid protein VP1 N-terminus is externalized, and together, they shape a pore in the host membrane through which the viral genome is translocated into the host cell cytoplasm. In terms of biological role, component of immature procapsids, which is cleaved into capsid proteins VP4 and VP2 after maturation. Allows the capsid to remain inactive before the maturation step. Its function is as follows. Cysteine protease that cleaves viral polyprotein and specific host proteins. It is responsible for the autocatalytic cleavage between the P1 and P2 regions, which is the first cleavage occurring in the polyprotein. Also cleaves the host translation initiation factor EIF4G1, in order to shut down the capped cellular mRNA translation. Inhibits the host nucleus-cytoplasm protein and RNA trafficking by cleaving host members of the nuclear pores. Counteracts stress granule formation probably by antagonizing its assembly or promoting its dissassembly. Cleaves and inhibits host IFIH1/MDA5, thereby inhibiting the type-I IFN production and the establishment of the antiviral state. Cleaves and inhibits host MAVS, thereby inhibiting the type-I IFN production and the establishment of the antiviral state. Plays an essential role in the virus replication cycle by acting as a viroporin. Creates a pore in the host endoplasmic reticulum and as a consequence releases Ca2+ in the cytoplasm of infected cell. In turn, high levels of cytoplasmic calcium may trigger membrane trafficking and transport of viral ER-associated proteins to viroplasms, sites of viral genome replication. Functionally, induces and associates with structural rearrangements of intracellular membranes. Displays RNA-binding, nucleotide binding and NTPase activities. May play a role in virion morphogenesis and viral RNA encapsidation by interacting with the capsid protein VP3. In terms of biological role, localizes the viral replication complex to the surface of membranous vesicles. Together with protein 3CD binds the Cis-Active RNA Element (CRE) which is involved in RNA synthesis initiation. Acts as a cofactor to stimulate the activity of 3D polymerase, maybe through a nucleid acid chaperone activity. Its function is as follows. Localizes the viral replication complex to the surface of membranous vesicles. It inhibits host cell endoplasmic reticulum-to-Golgi apparatus transport and causes the disassembly of the Golgi complex, possibly through GBF1 interaction. This would result in depletion of MHC, trail receptors and IFN receptors at the host cell surface. Plays an essential role in viral RNA replication by recruiting ACBD3 and PI4KB at the viral replication sites, thereby allowing the formation of the rearranged membranous structures where viral replication takes place. Acts as a primer for viral RNA replication and remains covalently bound to viral genomic RNA. VPg is uridylylated prior to priming replication into VPg-pUpU. The oriI viral genomic sequence may act as a template for this. The VPg-pUpU is then used as primer on the genomic RNA poly(A) by the RNA-dependent RNA polymerase to replicate the viral genome. During genome replication, the VPg-RNA linkage is removed by the host TDP2, thereby accelerating replication. During the late stage of the replication cycle, host TDP2 is excluded from sites of viral RNA synthesis and encapsidation, allowing for the generation of progeny virions. Functionally, involved in the viral replication complex and viral polypeptide maturation. It exhibits protease activity with a specificity and catalytic efficiency that is different from protease 3C. Protein 3CD lacks polymerase activity. Protein 3CD binds to the 5'UTR of the viral genome. In terms of biological role, replicates the viral genomic RNA on the surface of intracellular membranes. May form linear arrays of subunits that propagate along a strong head-to-tail interaction called interface-I. Covalently attaches UMP to a tyrosine of VPg, which is used to prime RNA synthesis. The positive stranded RNA genome is first replicated at virus induced membranous vesicles, creating a dsRNA genomic replication form. This dsRNA is then used as template to synthesize positive stranded RNA genomes. ss(+)RNA genomes are either translated, replicated or encapsidated. Its function is as follows. Major viral protease that mediates proteolytic processing of the polyprotein. Cleaves host EIF5B, contributing to host translation shutoff. Also cleaves host PABPC1, contributing to host translation shutoff. Cleaves host NLRP1, triggers host N-glycine-mediated degradation of the autoinhibitory NLRP1 N-terminal fragment. This Coxsackievirus B6 (strain Schmitt) protein is Genome polyprotein.